The chain runs to 448 residues: C4-dicarboxylate transport protein (448 aa).

Transmembrane regions (helical) follow at residues 22–42 (FQVVVAIVLGALLGHFEPAFA), 55–75 (LVKMIIAPVIFLTIVTGIAGM), 90–110 (TYFLFFSTLALIVGMVVAHVV), 137–157 (ELSLVGFLMDIIPATLISAFV), 159–179 (GNILQVLFVAVLFGIALALVG), 199–219 (LVHMLMKAAPIGAFGAIAFTI), and 232–252 (WLVGSFYLTSLFFVLVILGIV). Positions 428–448 (RAPPLQAPVPPPDAVAPVSAR) are disordered. The segment covering 432–441 (LQAPVPPPDA) has biased composition (pro residues).

Belongs to the dicarboxylate/amino acid:cation symporter (DAACS) (TC 2.A.23) family.

It localises to the cell inner membrane. Responsible for the transport of dicarboxylates such as succinate, fumarate, and malate from the periplasm across the membrane. In Xanthomonas campestris pv. campestris (strain 8004), this protein is C4-dicarboxylate transport protein.